We begin with the raw amino-acid sequence, 778 residues long: Phosphoribosylformylglycinamidine synthase subunit PurL (778 aa).

The active site involves His44. Residues Tyr47 and Lys86 each coordinate ATP. Mg(2+) is bound at residue Glu88. Substrate is bound by residues 89–92 (SHNH) and Arg111. His90 acts as the Proton acceptor in catalysis. Asp112 and Asp265 together coordinate Mg(2+). 309 to 311 (ESQ) contacts substrate. The interval 455-474 (TRQPPGEGLPGRSGQAGPPK) is disordered. ATP contacts are provided by Asn518 and Gly555. Position 556 (Asn556) interacts with Mg(2+). Ser558 is a substrate binding site.

Belongs to the FGAMS family. As to quaternary structure, monomer. Part of the FGAM synthase complex composed of 1 PurL, 1 PurQ and 2 PurS subunits.

It is found in the cytoplasm. The catalysed reaction is N(2)-formyl-N(1)-(5-phospho-beta-D-ribosyl)glycinamide + L-glutamine + ATP + H2O = 2-formamido-N(1)-(5-O-phospho-beta-D-ribosyl)acetamidine + L-glutamate + ADP + phosphate + H(+). The protein operates within purine metabolism; IMP biosynthesis via de novo pathway; 5-amino-1-(5-phospho-D-ribosyl)imidazole from N(2)-formyl-N(1)-(5-phospho-D-ribosyl)glycinamide: step 1/2. Part of the phosphoribosylformylglycinamidine synthase complex involved in the purines biosynthetic pathway. Catalyzes the ATP-dependent conversion of formylglycinamide ribonucleotide (FGAR) and glutamine to yield formylglycinamidine ribonucleotide (FGAM) and glutamate. The FGAM synthase complex is composed of three subunits. PurQ produces an ammonia molecule by converting glutamine to glutamate. PurL transfers the ammonia molecule to FGAR to form FGAM in an ATP-dependent manner. PurS interacts with PurQ and PurL and is thought to assist in the transfer of the ammonia molecule from PurQ to PurL. The polypeptide is Phosphoribosylformylglycinamidine synthase subunit PurL (Symbiobacterium thermophilum (strain DSM 24528 / JCM 14929 / IAM 14863 / T)).